The primary structure comprises 431 residues: Phosphoribosylamine--glycine ligase (431 aa).

The ATP-grasp domain occupies 108–315 (KDFLARHKIP…LVLLIEAALA (208 aa)). 134–195 (LREKGAPIVI…EEFLDGEEAS (62 aa)) is a binding site for ATP. Positions 285 and 287 each coordinate Mg(2+).

The protein belongs to the GARS family. Requires Mg(2+) as cofactor. Mn(2+) serves as cofactor.

It catalyses the reaction 5-phospho-beta-D-ribosylamine + glycine + ATP = N(1)-(5-phospho-beta-D-ribosyl)glycinamide + ADP + phosphate + H(+). Its pathway is purine metabolism; IMP biosynthesis via de novo pathway; N(1)-(5-phospho-D-ribosyl)glycinamide from 5-phospho-alpha-D-ribose 1-diphosphate: step 2/2. The polypeptide is Phosphoribosylamine--glycine ligase (Pseudomonas syringae pv. tomato (strain ATCC BAA-871 / DC3000)).